A 940-amino-acid polypeptide reads, in one-letter code: Vacuolar protein sorting-associated protein 54 (940 aa).

Residue T30 is modified to Phosphothreonine. The tract at residues 192–218 (QQLERDKPLENGAQGAPGPGTGGQTPT) is disordered. Residues 299 to 325 (HAILAEMEQAADQVRQLRAALAELHSH) are a coiled coil.

This sequence belongs to the VPS54 family.

Its subcellular location is the golgi apparatus. The protein localises to the trans-Golgi network. Its function is as follows. May be involved in retrograde transport from early and late endosomes to late Golgi. Required during spermatogenesis for sperm individualization. The chain is Vacuolar protein sorting-associated protein 54 (scat) from Drosophila melanogaster (Fruit fly).